The chain runs to 624 residues: Carbon monoxide dehydrogenase (624 aa).

Residues cysteine 37, cysteine 46, cysteine 49, cysteine 54, and cysteine 65 each contribute to the [4Fe-4S] cluster site. Residues histidine 256, cysteine 292, cysteine 336, cysteine 444, cysteine 475, and cysteine 516 each contribute to the [Ni-4Fe-5S] cluster site.

It belongs to the Ni-containing carbon monoxide dehydrogenase family. In terms of assembly, homodimer. It depends on [4Fe-4S] cluster as a cofactor. The cofactor is [Ni-4Fe-5S] cluster.

It carries out the reaction CO + 2 oxidized [2Fe-2S]-[ferredoxin] + H2O = 2 reduced [2Fe-2S]-[ferredoxin] + CO2 + 2 H(+). Functionally, CODH oxidizes carbon monoxide coupled, via CooF, to the reduction of a hydrogen cation by a hydrogenase (possibly CooH). This chain is Carbon monoxide dehydrogenase (cooS), found in Methanocaldococcus jannaschii (strain ATCC 43067 / DSM 2661 / JAL-1 / JCM 10045 / NBRC 100440) (Methanococcus jannaschii).